Reading from the N-terminus, the 715-residue chain is Fatty acid oxidation complex subunit alpha (715 aa).

The interval 1–190 (MDMTSAFTLN…RVGLVDEVVP (190 aa)) is enoyl-CoA hydratase. A 3-hydroxyacyl-CoA dehydrogenase region spans residues 306–715 (GPLASVGVLG…WNSGETDLKE (410 aa)).

It in the N-terminal section; belongs to the enoyl-CoA hydratase/isomerase family. In the central section; belongs to the 3-hydroxyacyl-CoA dehydrogenase family. Heterotetramer of two alpha chains (FadJ) and two beta chains (FadI).

The protein localises to the cytoplasm. The enzyme catalyses a (3S)-3-hydroxyacyl-CoA = a (2E)-enoyl-CoA + H2O. It catalyses the reaction a 4-saturated-(3S)-3-hydroxyacyl-CoA = a (3E)-enoyl-CoA + H2O. It carries out the reaction a (3S)-3-hydroxyacyl-CoA + NAD(+) = a 3-oxoacyl-CoA + NADH + H(+). The catalysed reaction is (3S)-3-hydroxybutanoyl-CoA = (3R)-3-hydroxybutanoyl-CoA. The protein operates within lipid metabolism; fatty acid beta-oxidation. Its function is as follows. Catalyzes the formation of a hydroxyacyl-CoA by addition of water on enoyl-CoA. Also exhibits 3-hydroxyacyl-CoA epimerase and 3-hydroxyacyl-CoA dehydrogenase activities. In Citrobacter koseri (strain ATCC BAA-895 / CDC 4225-83 / SGSC4696), this protein is Fatty acid oxidation complex subunit alpha.